The primary structure comprises 313 residues: Protein FixB (313 aa).

Leu-255–Asp-283 contacts FAD.

Belongs to the ETF alpha-subunit/FixB family. Heterodimer of FixA and FixB.

It participates in amine and polyamine metabolism; carnitine metabolism. Functionally, required for anaerobic carnitine reduction. May bring reductant to CaiA. The polypeptide is Protein FixB (Escherichia coli (strain 55989 / EAEC)).